The sequence spans 524 residues: Beta-glucosidase 21 (524 aa).

Positions 1–24 are cleaved as a signal peptide; sequence MALQKFPLMGLLLLLTILVSVTTA. Residue glutamine 55 coordinates a beta-D-glucoside. N-linked (GlcNAc...) asparagine glycosylation is present at asparagine 61. Residues histidine 158 and 203–204 contribute to the a beta-D-glucoside site; that span reads NE. Residue glutamate 204 is the Proton donor of the active site. Residues cysteine 223 and cysteine 230 are joined by a disulfide bond. A beta-D-glucoside is bound by residues tyrosine 346, glutamate 418, tryptophan 468, 475 to 476, and phenylalanine 484; that span reads EW. Glutamate 418 acts as the Nucleophile in catalysis. Asparagine 494 carries an N-linked (GlcNAc...) asparagine glycan. The short motif at 521-524 is the Prevents secretion from ER element; that stretch reads RDEL.

Belongs to the glycosyl hydrolase 1 family. Component of the PYK10 complex, at least composed of PYK10/BGLU23, BGLU21, BGLU22, JAL22, JAL23, PBP1/JAL30, PBP2/JAL31, JAL32, JAL33, JAL34, JAL35, GLL22 and GLL23. In terms of tissue distribution, expressed exclusively in roots.

It is found in the endoplasmic reticulum lumen. The enzyme catalyses Hydrolysis of terminal, non-reducing beta-D-glucosyl residues with release of beta-D-glucose.. With respect to regulation, activated upon binding to PBP1 or PBP2. In terms of biological role, beta-D-glucosidase active on scopolin &gt;&gt; esculin &gt;&gt; 4-MU-glucoside &gt; DIMBOA-glucoside. No activity with pNP-glucoside, oNP-glucoside and sinigrin as substrates. This Arabidopsis thaliana (Mouse-ear cress) protein is Beta-glucosidase 21.